The chain runs to 417 residues: Phosphoglycerate kinase (417 aa).

Valine 23, aspartate 24, phenylalanine 25, asparagine 26, glutamine 38, arginine 39, serine 62, histidine 63, glycine 65, arginine 66, leucine 121, arginine 122, histidine 169, and arginine 170 together coordinate (2R)-3-phosphoglycerate. Glycine 213 is a binding site for ADP. Glycine 213 lines the CDP pocket. Residues alanine 214 and lysine 215 each contribute to the AMP site. Residue alanine 214 participates in ATP binding. Residue alanine 214 coordinates Mg(2+). Aspartate 218 lines the CDP pocket. Aspartate 218 serves as a coordination point for Mg(2+). AMP is bound at residue lysine 219. Lysine 219 lines the ATP pocket. An ADP-binding site is contributed by glycine 237. Glycine 237 is a CDP binding site. AMP contacts are provided by glycine 238 and glycine 312. ATP-binding residues include glycine 238 and glycine 312. Residues glycine 337 and phenylalanine 342 each contribute to the CDP site. Phenylalanine 342 is an ADP binding site. Glutamate 343 provides a ligand contact to AMP. Glutamate 343, aspartate 374, and threonine 375 together coordinate ATP. Residue aspartate 374 participates in Mg(2+) binding.

Belongs to the phosphoglycerate kinase family. In terms of assembly, monomer. It depends on Mg(2+) as a cofactor.

The protein resides in the cytoplasm. It localises to the mitochondrion. The catalysed reaction is (2R)-3-phosphoglycerate + ATP = (2R)-3-phospho-glyceroyl phosphate + ADP. Its pathway is carbohydrate degradation; glycolysis; pyruvate from D-glyceraldehyde 3-phosphate: step 2/5. Its function is as follows. Catalyzes one of the two ATP producing reactions in the glycolytic pathway via the reversible conversion of 1,3-diphosphoglycerate to 3-phosphoglycerate. Both L- and D- forms of purine and pyrimidine nucleotides can be used as substrates, but the activity is much lower on pyrimidines. Negatively regulates the biosynthesis of acetyl-CoA from pyruvate in the mitochondrion. This Yarrowia lipolytica (strain CLIB 122 / E 150) (Yeast) protein is Phosphoglycerate kinase (PGK1).